A 355-amino-acid chain; its full sequence is Electron transfer flavoprotein subunit alpha, mitochondrial (355 aa).

295–323 (LYIAVGISGAIQHLAGMKDSKVIVAINKD) contacts FAD.

This sequence belongs to the ETF alpha-subunit/FixB family. Heterodimer of an alpha and a beta subunit. FAD serves as cofactor.

Its subcellular location is the mitochondrion matrix. The electron transfer flavoprotein serves as a specific electron acceptor for several dehydrogenases, including five acyl-CoA dehydrogenases, glutaryl-CoA and sarcosine dehydrogenase. It transfers the electrons to the main mitochondrial respiratory chain via ETF-ubiquinone oxidoreductase (ETF dehydrogenase). The protein is Electron transfer flavoprotein subunit alpha, mitochondrial (etfa) of Dictyostelium discoideum (Social amoeba).